A 328-amino-acid polypeptide reads, in one-letter code: dITP/XTP pyrophosphatase (328 aa).

Residues 1–129 (MSEKIYEYKD…ATSEQGFGDI (129 aa)) form a unknown region. The NTP pyrophosphatase stretch occupies residues 130 to 324 (ILIATRNEGK…KLMEVFPAWQ (195 aa)). 134–139 (TRNEGK) lines the substrate pocket. The active-site Proton acceptor is the D196. Residue D196 participates in Mg(2+) binding. Substrate-binding positions include S197, 280–283 (FGYD), K303, and 308–309 (HR).

Belongs to the HAM1 NTPase family. As to quaternary structure, homodimer. It depends on Mg(2+) as a cofactor.

It catalyses the reaction XTP + H2O = XMP + diphosphate + H(+). The catalysed reaction is dITP + H2O = dIMP + diphosphate + H(+). The enzyme catalyses ITP + H2O = IMP + diphosphate + H(+). Functionally, pyrophosphatase that catalyzes the hydrolysis of nucleoside triphosphates to their monophosphate derivatives, with a high preference for the non-canonical purine nucleotides XTP (xanthosine triphosphate), dITP (deoxyinosine triphosphate) and ITP. Seems to function as a house-cleaning enzyme that removes non-canonical purine nucleotides from the nucleotide pool, thus preventing their incorporation into DNA/RNA and avoiding chromosomal lesions. This Streptococcus pyogenes serotype M3 (strain ATCC BAA-595 / MGAS315) protein is dITP/XTP pyrophosphatase.